We begin with the raw amino-acid sequence, 191 residues long: Fe/S biogenesis protein NfuA (191 aa).

The [4Fe-4S] cluster site is built by Cys149 and Cys152.

It belongs to the NfuA family. In terms of assembly, homodimer. It depends on [4Fe-4S] cluster as a cofactor.

Its function is as follows. Involved in iron-sulfur cluster biogenesis. Binds a 4Fe-4S cluster, can transfer this cluster to apoproteins, and thereby intervenes in the maturation of Fe/S proteins. Could also act as a scaffold/chaperone for damaged Fe/S proteins. In Salmonella paratyphi A (strain ATCC 9150 / SARB42), this protein is Fe/S biogenesis protein NfuA.